The sequence spans 388 residues: Outer membrane protein assembly factor BamB (388 aa).

The N-terminal stretch at 1-21 (MILGWTQRIFTLLVVVTLLAA) is a signal peptide. Cys-22 is lipidated: N-palmitoyl cysteine. The S-diacylglycerol cysteine moiety is linked to residue Cys-22.

Belongs to the BamB family. Part of the Bam complex.

The protein localises to the cell outer membrane. Functionally, part of the outer membrane protein assembly complex, which is involved in assembly and insertion of beta-barrel proteins into the outer membrane. The sequence is that of Outer membrane protein assembly factor BamB from Kangiella koreensis (strain DSM 16069 / JCM 12317 / KCTC 12182 / SW-125).